The chain runs to 409 residues: Imidazolonepropionase (409 aa).

Fe(3+)-binding residues include His-78 and His-80. Positions 78 and 80 each coordinate Zn(2+). 4-imidazolone-5-propanoate contacts are provided by Arg-87, Tyr-150, and His-183. Tyr-150 lines the N-formimidoyl-L-glutamate pocket. His-248 contacts Fe(3+). His-248 lines the Zn(2+) pocket. Gln-251 contacts 4-imidazolone-5-propanoate. Residue Asp-323 participates in Fe(3+) binding. Zn(2+) is bound at residue Asp-323. Positions 325 and 327 each coordinate N-formimidoyl-L-glutamate. Thr-328 is a binding site for 4-imidazolone-5-propanoate.

Belongs to the metallo-dependent hydrolases superfamily. HutI family. It depends on Zn(2+) as a cofactor. The cofactor is Fe(3+).

It is found in the cytoplasm. The enzyme catalyses 4-imidazolone-5-propanoate + H2O = N-formimidoyl-L-glutamate. The protein operates within amino-acid degradation; L-histidine degradation into L-glutamate; N-formimidoyl-L-glutamate from L-histidine: step 3/3. Its function is as follows. Catalyzes the hydrolytic cleavage of the carbon-nitrogen bond in imidazolone-5-propanoate to yield N-formimidoyl-L-glutamate. It is the third step in the universal histidine degradation pathway. The chain is Imidazolonepropionase from Mesorhizobium japonicum (strain LMG 29417 / CECT 9101 / MAFF 303099) (Mesorhizobium loti (strain MAFF 303099)).